The following is a 285-amino-acid chain: Complex I assembly factor TIMMDC1, mitochondrial (285 aa).

4 consecutive transmembrane segments (helical) span residues 80–100 (AALS…FIYA), 137–159 (RWSW…LTVY), 165–185 (LSHF…NLGL), and 188–208 (LVAG…LLMA).

The protein belongs to the Tim17/Tim22/Tim23 family. In terms of assembly, associates with the intermediate 315 kDa subcomplex of incompletely assembled complex I. Interacts with TMEM70.

The protein localises to the mitochondrion membrane. Chaperone protein involved in the assembly of the mitochondrial NADH:ubiquinone oxidoreductase complex (complex I). Participates in constructing the membrane arm of complex I. This chain is Complex I assembly factor TIMMDC1, mitochondrial, found in Rattus norvegicus (Rat).